A 379-amino-acid chain; its full sequence is Homoserine O-succinyltransferase (379 aa).

The 310-residue stretch at 51–360 (NAVLICHALS…DSPYGHDAFL (310 aa)) folds into the AB hydrolase-1 domain. The active-site Nucleophile is the Ser-157. Arg-227 serves as a coordination point for substrate. Active-site residues include Asp-323 and His-356. Asp-357 is a binding site for substrate.

It belongs to the AB hydrolase superfamily. MetX family. In terms of assembly, homodimer.

It is found in the cytoplasm. It catalyses the reaction L-homoserine + succinyl-CoA = O-succinyl-L-homoserine + CoA. It functions in the pathway amino-acid biosynthesis; L-methionine biosynthesis via de novo pathway; O-succinyl-L-homoserine from L-homoserine: step 1/1. Functionally, transfers a succinyl group from succinyl-CoA to L-homoserine, forming succinyl-L-homoserine. The protein is Homoserine O-succinyltransferase of Pseudomonas putida (strain W619).